A 107-amino-acid polypeptide reads, in one-letter code: uncharacterized protein (107 aa).

The segment at 23–64 is disordered; it reads SASSSSSTRIPSGFASATSSKSNSSTKSSPSPINSFNNKTNN. A compositionally biased stretch (low complexity) spans 37–57; the sequence is ASATSSKSNSSTKSSPSPINS. A helical transmembrane segment spans residues 76-98; it reads LAFGIVEFMVFNGMISTITTTTF.

Its subcellular location is the membrane. This is an uncharacterized protein from Dictyostelium discoideum (Social amoeba).